The following is a 117-amino-acid chain: Calcitonin receptor-stimulating peptide 2 (117 aa).

Residues 1 to 25 form the signal peptide; that stretch reads MGFWKFPPFLVLSILVLYQAGMFHT. A propeptide spanning residues 26–79 is cleaved from the precursor; the sequence is APVRLPLESSFDSATLTEEEVSLLLVAMVKDYVQMKATVLEQESEDFSITAQEK. An intrachain disulfide couples cysteine 81 to cysteine 86.

The protein belongs to the calcitonin family. As to expression, mainly expressed in the thyroid gland and CNS. Found in the nerve cells of the cerebrum, hippocampus, hypothalamus, pons/midbrain and thalamus. Also detected in the glia-like cells of pons/midbrain and in meninx of tactus opticus.

The protein resides in the secreted. The chain is Calcitonin receptor-stimulating peptide 2 (CRSP2) from Sus scrofa (Pig).